A 54-amino-acid polypeptide reads, in one-letter code: Large ribosomal subunit protein bL33 (54 aa).

This sequence belongs to the bacterial ribosomal protein bL33 family.

The polypeptide is Large ribosomal subunit protein bL33 (Corynebacterium efficiens (strain DSM 44549 / YS-314 / AJ 12310 / JCM 11189 / NBRC 100395)).